A 307-amino-acid polypeptide reads, in one-letter code: MTKKMGLLVMAYGTPYKESDIEPYYTDIRHGKRPSEEELQDLKDRYEFIGGLSPLAGTTDDQADALVSALNKAYADVEFKLYLGLKHISPFIEDAVEQMHNDGITEAITVVLAPHYSSFSVGSYDKRADEEAAKYGIQLTHVKHYYEQPKFIEYWTNKVNETLAQIPEEEHKDTVLVVSAHSLPKGLIEKNNDPYPQELEHTALLIKEQSNIEHIAIGWQSEGNTGTPWLGPDVQDLTRDLYEKHQYKNFIYTPVGFVCEHLEVLYDNDYECKVVCDDIGANYYRPKMPNTHPLFIGAIIDEIKSIF.

Fe-coproporphyrin III contacts are provided by residues Y12, R29, 45-46 (RY), S53, and Y124. 2 residues coordinate Fe(2+): H181 and E263.

It belongs to the ferrochelatase family.

The protein resides in the cytoplasm. The catalysed reaction is Fe-coproporphyrin III + 2 H(+) = coproporphyrin III + Fe(2+). Its pathway is porphyrin-containing compound metabolism; protoheme biosynthesis. Functionally, involved in coproporphyrin-dependent heme b biosynthesis. Catalyzes the insertion of ferrous iron into coproporphyrin III to form Fe-coproporphyrin III. It can also insert iron into protoporphyrin IX, but it has a much stronger preference for coproprophyrin III as the substrate. This is Coproporphyrin III ferrochelatase from Staphylococcus aureus (strain NCTC 8325 / PS 47).